Here is a 41-residue protein sequence, read N- to C-terminus: Large ribosomal subunit protein bL36 (41 aa).

The protein belongs to the bacterial ribosomal protein bL36 family.

This is Large ribosomal subunit protein bL36 from Gluconobacter oxydans (strain 621H) (Gluconobacter suboxydans).